A 181-amino-acid chain; its full sequence is Peptidyl-tRNA hydrolase (181 aa).

Tyrosine 14 serves as a coordination point for tRNA. Histidine 19 acts as the Proton acceptor in catalysis. Residues tyrosine 60, asparagine 62, and asparagine 108 each coordinate tRNA.

This sequence belongs to the PTH family. In terms of assembly, monomer.

The protein localises to the cytoplasm. It catalyses the reaction an N-acyl-L-alpha-aminoacyl-tRNA + H2O = an N-acyl-L-amino acid + a tRNA + H(+). Functionally, hydrolyzes ribosome-free peptidyl-tRNAs (with 1 or more amino acids incorporated), which drop off the ribosome during protein synthesis, or as a result of ribosome stalling. Its function is as follows. Catalyzes the release of premature peptidyl moieties from peptidyl-tRNA molecules trapped in stalled 50S ribosomal subunits, and thus maintains levels of free tRNAs and 50S ribosomes. This chain is Peptidyl-tRNA hydrolase, found in Metamycoplasma arthritidis (strain 158L3-1) (Mycoplasma arthritidis).